The following is a 305-amino-acid chain: Methionyl-tRNA formyltransferase (305 aa).

Position 109–112 (109–112 (SLLP)) interacts with (6S)-5,6,7,8-tetrahydrofolate.

Belongs to the Fmt family.

The catalysed reaction is L-methionyl-tRNA(fMet) + (6R)-10-formyltetrahydrofolate = N-formyl-L-methionyl-tRNA(fMet) + (6S)-5,6,7,8-tetrahydrofolate + H(+). Attaches a formyl group to the free amino group of methionyl-tRNA(fMet). The formyl group appears to play a dual role in the initiator identity of N-formylmethionyl-tRNA by promoting its recognition by IF2 and preventing the misappropriation of this tRNA by the elongation apparatus. This chain is Methionyl-tRNA formyltransferase, found in Paramagnetospirillum magneticum (strain ATCC 700264 / AMB-1) (Magnetospirillum magneticum).